A 229-amino-acid chain; its full sequence is MYDISGWKHVFKLDPNKELSDEHLEMICESGTDAVIVGGSDGVTIDNVLHMLVSIRRYAVPCVLEVSDVEAITPGFDFYYIPSVLNSRKVEWVTGVHHEALKEFGDIMDWDEIFMEGYCVLNPEAKVAQLTEAKCDLTEDDVIAYARLADKLLHLPIFYLEYSGTYGDVELVKNVKAELKQAKLYYGGGISNAEQAKEMAQYADTVVVGNIIYDDIKSALKTVKAVKGE.

K12 serves as a coordination point for sn-glycerol 1-phosphate. Residues D14 and S40 each contribute to the Mg(2+) site. Sn-glycerol 1-phosphate is bound by residues Y159–G164, G189, and G209–N210.

Belongs to the GGGP/HepGP synthase family. Group I subfamily. In terms of assembly, homodimer. Mg(2+) serves as cofactor.

The catalysed reaction is sn-glycerol 1-phosphate + all-trans-heptaprenyl diphosphate = 3-heptaprenyl-sn-glycero-1-phosphate + diphosphate. It functions in the pathway membrane lipid metabolism; glycerophospholipid metabolism. Its function is as follows. Prenyltransferase that catalyzes in vivo the transfer of the heptaprenyl moiety of heptaprenyl pyrophosphate (HepPP; 35 carbon atoms) to the C3 hydroxyl of sn-glycerol-1-phosphate (G1P), producing heptaprenylglyceryl phosphate (HepGP). This reaction is an ether-bond-formation step in the biosynthesis of archaea-type G1P-based membrane lipids found in Bacillales. The sequence is that of Heptaprenylglyceryl phosphate synthase from Bacillus cereus (strain ATCC 14579 / DSM 31 / CCUG 7414 / JCM 2152 / NBRC 15305 / NCIMB 9373 / NCTC 2599 / NRRL B-3711).